The chain runs to 114 residues: Large ribosomal subunit protein P1 (114 aa).

The interval 55–114 (EEAAAAPAAAPAASGSDDEAAADDGDDDEEADADEAAEAEDAGDDDDEEPSGEGLGDLFG) is disordered. Low complexity predominate over residues 56–69 (EAAAAPAAAPAASG). Residues 70–105 (SDDEAAADDGDDDEEADADEAAEAEDAGDDDDEEPS) are compositionally biased toward acidic residues.

Belongs to the eukaryotic ribosomal protein P1/P2 family. As to quaternary structure, part of the 50S ribosomal subunit. Homodimer, it forms part of the ribosomal stalk which helps the ribosome interact with GTP-bound translation factors. Forms a heptameric uL10/P0(P1)2(P1)2(P1)2 complex, where uL10/P0 forms an elongated spine to which the P1 dimers bind in a sequential fashion.

In terms of biological role, forms part of the ribosomal stalk, playing a central role in the interaction of the ribosome with GTP-bound translation factors. The polypeptide is Large ribosomal subunit protein P1 (Halobacterium salinarum (strain ATCC 700922 / JCM 11081 / NRC-1) (Halobacterium halobium)).